We begin with the raw amino-acid sequence, 294 residues long: tRNA dimethylallyltransferase (294 aa).

G9 to S16 serves as a coordination point for ATP. A substrate-binding site is contributed by T11–S16. Residues D34–Q37 are interaction with substrate tRNA.

This sequence belongs to the IPP transferase family. Monomer. It depends on Mg(2+) as a cofactor.

It catalyses the reaction adenosine(37) in tRNA + dimethylallyl diphosphate = N(6)-dimethylallyladenosine(37) in tRNA + diphosphate. Its function is as follows. Catalyzes the transfer of a dimethylallyl group onto the adenine at position 37 in tRNAs that read codons beginning with uridine, leading to the formation of N6-(dimethylallyl)adenosine (i(6)A). The sequence is that of tRNA dimethylallyltransferase from Trichormus variabilis (strain ATCC 29413 / PCC 7937) (Anabaena variabilis).